Consider the following 356-residue polypeptide: Nucleosome assembly protein 1;4 (356 aa).

Residues 34–88 (VNALKNKLQNLAGQHSDILETLTPQVRKRVDVLRELQSQHDELESHFFEERAALE) adopt a coiled-coil conformation. The short motif at 55 to 70 (LTPQVRKRVDVLRELQ) is the Nuclear export signal element. The Nuclear localization signal motif lies at 230-235 (KKKPKK). Residues 304–356 (FTGEAAEGDEFEDIEDDDDDDDDDDDEDDEDEEDEDDEEEEKSKKKSSALKVE) are disordered. The span at 309 to 343 (AEGDEFEDIEDDDDDDDDDDDEDDEDEEDEDDEEE) shows a compositional bias: acidic residues. A compositionally biased stretch (basic residues) spans 347 to 356 (KKKSSALKVE).

It belongs to the nucleosome assembly protein (NAP) family. Can form homomeric and heteromeric protein complexes with NAP1;3. Binds histones H2A and H2B in vivo. Also able to bind histones H1 and H4 in vitro. Interacts with CYCB1;1 and with alpha tubulin.

The protein resides in the nucleus. It is found in the cytoplasm. In terms of biological role, may modulate chromatin structure by regulation of nucleosome assembly/disassembly. Could function together with B-type cyclins in the regulation of microtubule dynamics. The sequence is that of Nucleosome assembly protein 1;4 (NAP1;4) from Nicotiana tabacum (Common tobacco).